We begin with the raw amino-acid sequence, 445 residues long: tRNA modification GTPase MnmE (445 aa).

(6S)-5-formyl-5,6,7,8-tetrahydrofolate-binding residues include Arg20, Glu79, and Lys119. The region spanning 215-371 (GLKLAIIGPP…ILKNIENIAE (157 aa)) is the TrmE-type G domain. Asn225 contacts K(+). GTP is bound by residues 225–230 (NVGKSS), 244–250 (SNIAGTT), and 269–272 (DTAG). Ser229 provides a ligand contact to Mg(2+). K(+)-binding residues include Ser244, Ile246, and Thr249. Residue Thr250 participates in Mg(2+) binding. Lys445 serves as a coordination point for (6S)-5-formyl-5,6,7,8-tetrahydrofolate.

Belongs to the TRAFAC class TrmE-Era-EngA-EngB-Septin-like GTPase superfamily. TrmE GTPase family. In terms of assembly, homodimer. Heterotetramer of two MnmE and two MnmG subunits. The cofactor is K(+).

The protein localises to the cytoplasm. Functionally, exhibits a very high intrinsic GTPase hydrolysis rate. Involved in the addition of a carboxymethylaminomethyl (cmnm) group at the wobble position (U34) of certain tRNAs, forming tRNA-cmnm(5)s(2)U34. In Rickettsia rickettsii (strain Iowa), this protein is tRNA modification GTPase MnmE.